The primary structure comprises 334 residues: Beta-ketoacyl-[acyl-carrier-protein] synthase III (334 aa).

Residues Cys-114 and His-260 contribute to the active site. Positions 261-265 (QANLR) are ACP-binding. Asn-290 is a catalytic residue.

The protein belongs to the thiolase-like superfamily. FabH family. In terms of assembly, homodimer.

Its subcellular location is the cytoplasm. It carries out the reaction malonyl-[ACP] + acetyl-CoA + H(+) = 3-oxobutanoyl-[ACP] + CO2 + CoA. The protein operates within lipid metabolism; fatty acid biosynthesis. Functionally, catalyzes the condensation reaction of fatty acid synthesis by the addition to an acyl acceptor of two carbons from malonyl-ACP. Catalyzes the first condensation reaction which initiates fatty acid synthesis and may therefore play a role in governing the total rate of fatty acid production. Possesses both acetoacetyl-ACP synthase and acetyl transacylase activities. Its substrate specificity determines the biosynthesis of branched-chain and/or straight-chain of fatty acids. In Clostridium tetani (strain Massachusetts / E88), this protein is Beta-ketoacyl-[acyl-carrier-protein] synthase III.